Consider the following 836-residue polypeptide: Outer membrane usher protein PapC (836 aa).

Residues 1-24 form the signal peptide; sequence MKDRIPFAVNNITCVILLSLFCNA. Cysteines 814 and 832 form a disulfide.

It belongs to the fimbrial export usher family.

It is found in the cell outer membrane. Involved in the export and assembly of pili subunits across the outer membrane. Forms a hexameric ring-shaped pore in the outer bacterial membrane. The 2 nanometer-diameter pore allows the passage of the thin tip fibrillum. As for the rod, it probably unwinds into linear fibers which would therefore be narrow enough to pass through the pore. The sequence is that of Outer membrane usher protein PapC (papC) from Escherichia coli.